A 273-amino-acid polypeptide reads, in one-letter code: Putative phosphoenolpyruvate synthase regulatory protein (273 aa).

Position 153–160 (A153–T160) interacts with ADP.

The protein belongs to the pyruvate, phosphate/water dikinase regulatory protein family. PSRP subfamily.

It catalyses the reaction [pyruvate, water dikinase] + ADP = [pyruvate, water dikinase]-phosphate + AMP + H(+). The catalysed reaction is [pyruvate, water dikinase]-phosphate + phosphate + H(+) = [pyruvate, water dikinase] + diphosphate. Bifunctional serine/threonine kinase and phosphorylase involved in the regulation of the phosphoenolpyruvate synthase (PEPS) by catalyzing its phosphorylation/dephosphorylation. The polypeptide is Putative phosphoenolpyruvate synthase regulatory protein (Xanthomonas axonopodis pv. citri (strain 306)).